The sequence spans 660 residues: DNA primase (660 aa).

A CHC2-type zinc finger spans residues 40-64; the sequence is CPFHKEKTPSFTVSPDKQFYYCFGC. Residues 94 to 115 are disordered; the sequence is GMEVPREQGRRDQKPRQPTDSP. The segment covering 97–110 has biased composition (basic and acidic residues); it reads VPREQGRRDQKPRQ. Residues 261-343 enclose the Toprim domain; sequence DEIIVVEGYM…GRRARFLFLP (83 aa). 3 residues coordinate Mg(2+): Glu-267, Asp-311, and Asp-313. Disordered regions lie at residues 425–449 and 476–519; these read DPQQ…DPGY and QAWK…APVE. Over residues 428 to 442 the composition is skewed to polar residues; that stretch reads QVEQLAQQAPATSSM. Basic and acidic residues predominate over residues 488 to 498; the sequence is PWSDKPWDKNR.

Belongs to the DnaG primase family. In terms of assembly, monomer. Interacts with DnaB. Requires Zn(2+) as cofactor. Mg(2+) is required as a cofactor.

It carries out the reaction ssDNA + n NTP = ssDNA/pppN(pN)n-1 hybrid + (n-1) diphosphate.. Functionally, RNA polymerase that catalyzes the synthesis of short RNA molecules used as primers for DNA polymerase during DNA replication. This is DNA primase from Pseudomonas putida (strain ATCC 47054 / DSM 6125 / CFBP 8728 / NCIMB 11950 / KT2440).